The following is a 1487-amino-acid chain: Probable lysine-specific demethylase SE14 (1487 aa).

The interval 1 to 23 (MPPQPPPAASASASAPDPAVPAW) is disordered. The segment covering 9-22 (ASASASAPDPAVPA) has biased composition (low complexity). The 42-residue stretch at 30 to 71 (APEYRPTESEFADPIAFLSRVEREAAAYGICKVIPPHPRPSR) folds into the JmjN domain. A compositionally biased stretch (low complexity) spans 86 to 104 (CDAPAPSPAAASDSSIPPS). Residues 86–113 (CDAPAPSPAAASDSSIPPSSSSPPPVSA) form a disordered region. Residues 232–398 (NSPWNLQAIA…FAKEAAVRRA (167 aa)) form the JmjC domain. The Fe cation site is built by H275, E277, and H366. Disordered regions lie at residues 494 to 555 (SCSK…DDGD) and 684 to 718 (YGDTETPEKKIPSDCPGSELSKQSGRGDVNVPDVE). Basic and acidic residues-rich tracts occupy residues 498–507 (APEKKGEDGP) and 542–551 (QAPEGEKLDT). Residues 1377-1400 (FQCDIEFCDMTFETKAELRAHQRN) form a C2H2-type 1; degenerate zinc finger. 3 consecutive C2H2-type zinc fingers follow at residues 1400–1424 (NICTDESCGKRFSSHKYLKRHQCVH), 1430–1454 (FKCPWDGCPMTFKWLWAQTEHIRVH), and 1460–1486 (YKCSAPDCGQSFRYVSDYSRHRKKFNH).

The cofactor is Fe(2+).

The protein resides in the nucleus. In terms of biological role, histone demethylase that demethylates 'Lys-4' (H3K4me) of histone H3. Involved in the control of flowering time. Has a suppressive effect on floral transition under long day conditions through the demethylation of H3K4me3 in the promoter region of the flower-promoting signal HD3B/RFT1. This is Probable lysine-specific demethylase SE14 (SE14) from Oryza sativa subsp. japonica (Rice).